The chain runs to 318 residues: Xanthocillin biosynthesis cluster transcription factor xanC (318 aa).

Basic and acidic residues predominate over residues 1-27; the sequence is MHSQTTKDEQSKDDSSNEKQDAIERRR. The disordered stretch occupies residues 1 to 39; that stretch reads MHSQTTKDEQSKDDSSNEKQDAIERRRLQNRLSQRNHRR. Residues 20–52 form the bZIP domain; the sequence is QDAIERRRLQNRLSQRNHRRKIRDRIAKLQERV. The basic motif stretch occupies residues 25–40; it reads RRRLQNRLSQRNHRRK. Positions 41 to 48 are leucine-zipper; sequence IRDRIAKL. Disordered regions lie at residues 71 to 107, 123 to 171, and 269 to 318; these read PPAASMMESKPQGDFDSNPLASVSEDPAISNPPQRNV, PSSS…FSLD, and GRHC…SMML. Composition is skewed to low complexity over residues 123 to 139 and 147 to 171; these read PSSSSLPSPTSPLPFDL and STNSSPSTLLNSSPSSSQLSPFSLD. The span at 293–318 shows a compositional bias: polar residues; that stretch reads APSSTPFCPLHPSQSSSLDNYQSMML.

This sequence belongs to the bZIP family.

It localises to the nucleus. Its function is as follows. Transcription regulator that specifically up-regulates the gene cluster that mediates the biosynthesis of the isocyanide xanthocillin and its derivatives. The sequence is that of Xanthocillin biosynthesis cluster transcription factor xanC from Aspergillus fumigatus (strain ATCC MYA-4609 / CBS 101355 / FGSC A1100 / Af293) (Neosartorya fumigata).